We begin with the raw amino-acid sequence, 334 residues long: Magnesium-chelatase 38 kDa subunit (334 aa).

36 to 43 (GDRGTGKS) provides a ligand contact to ATP.

The protein belongs to the Mg-chelatase subunits D/I family.

It catalyses the reaction protoporphyrin IX + Mg(2+) + ATP + H2O = Mg-protoporphyrin IX + ADP + phosphate + 3 H(+). It participates in porphyrin-containing compound metabolism; bacteriochlorophyll biosynthesis. Its function is as follows. Involved in bacteriochlorophyll biosynthesis; introduces a magnesium ion into protoporphyrin IX to yield Mg-protoporphyrin IX. In Cereibacter sphaeroides (strain ATCC 17023 / DSM 158 / JCM 6121 / CCUG 31486 / LMG 2827 / NBRC 12203 / NCIMB 8253 / ATH 2.4.1.) (Rhodobacter sphaeroides), this protein is Magnesium-chelatase 38 kDa subunit (bchI).